Consider the following 66-residue polypeptide: DNA-directed RNA polymerase subunit Rpo10 (66 aa).

Positions 7, 10, 44, and 45 each coordinate Zn(2+).

This sequence belongs to the archaeal Rpo10/eukaryotic RPB10 RNA polymerase subunit family. Part of the RNA polymerase complex. Zn(2+) serves as cofactor.

The protein resides in the cytoplasm. It catalyses the reaction RNA(n) + a ribonucleoside 5'-triphosphate = RNA(n+1) + diphosphate. Its function is as follows. DNA-dependent RNA polymerase (RNAP) catalyzes the transcription of DNA into RNA using the four ribonucleoside triphosphates as substrates. The polypeptide is DNA-directed RNA polymerase subunit Rpo10 (Hyperthermus butylicus (strain DSM 5456 / JCM 9403 / PLM1-5)).